The sequence spans 300 residues: Probable phytol kinase, chloroplastic (300 aa).

The N-terminal 36 residues, M1 to V36, are a transit peptide targeting the chloroplast. A run of 7 helical transmembrane segments spans residues L60 to V78, V98 to T118, F122 to F142, Y168 to V188, F227 to I247, A254 to T274, and V276 to G296.

This sequence belongs to the polyprenol kinase family.

The protein localises to the plastid. It is found in the chloroplast membrane. The enzyme catalyses phytol + CTP = phytyl phosphate + CDP + H(+). It participates in cofactor biosynthesis; tocopherol biosynthesis. Functionally, involved in the activation and reutilization of phytol from chlorophyll degradation in plant metabolism, including tocopherol biosynthesis. Catalyzes the conversion of phytol to phytol monophosphate (PMP). In Triticum aestivum (Wheat), this protein is Probable phytol kinase, chloroplastic.